The chain runs to 166 residues: NAD(P)H-quinone oxidoreductase subunit I, chloroplastic (166 aa).

2 consecutive 4Fe-4S ferredoxin-type domains span residues 55-84 (GRIHFEFDKCIACEVCVRVCPIDLPVVDWK) and 95-124 (LNYSIDFGICIFCGHCVEYCPTNCLSMTEE). 8 residues coordinate [4Fe-4S] cluster: Cys-64, Cys-67, Cys-70, Cys-74, Cys-104, Cys-107, Cys-110, and Cys-114.

It belongs to the complex I 23 kDa subunit family. In terms of assembly, NDH is composed of at least 16 different subunits, 5 of which are encoded in the nucleus. Requires [4Fe-4S] cluster as cofactor.

The protein resides in the plastid. The protein localises to the chloroplast thylakoid membrane. It catalyses the reaction a plastoquinone + NADH + (n+1) H(+)(in) = a plastoquinol + NAD(+) + n H(+)(out). The catalysed reaction is a plastoquinone + NADPH + (n+1) H(+)(in) = a plastoquinol + NADP(+) + n H(+)(out). Its function is as follows. NDH shuttles electrons from NAD(P)H:plastoquinone, via FMN and iron-sulfur (Fe-S) centers, to quinones in the photosynthetic chain and possibly in a chloroplast respiratory chain. The immediate electron acceptor for the enzyme in this species is believed to be plastoquinone. Couples the redox reaction to proton translocation, and thus conserves the redox energy in a proton gradient. This Perymeniopsis ovalifolia protein is NAD(P)H-quinone oxidoreductase subunit I, chloroplastic.